The primary structure comprises 499 residues: Citrinin biosynthesis cluster MFS transporter mrr1 (499 aa).

Residues 1-29 (MKEEIDAPVSTDASGTDLENARDQPSGEK) are disordered. Helical transmembrane passes span 58–78 (SLIT…SSVF), 95–115 (VMTL…LVWG), 124–144 (LKPL…VAVA), 155–175 (FFLG…LADF), 187–207 (LFSA…GFIV), 215–235 (WTAW…FLTL), 291–311 (ILVC…LFFV), and 327–347 (GIAA…CLLV). N-linked (GlcNAc...) asparagine glycosylation occurs at Asn361. A run of 4 helical transmembrane segments spans residues 370–390 (LPPM…FGWT), 395–415 (ISWA…LMIW), 443–463 (AVGA…GVDW), and 467–487 (LLGF…FYGA).

Belongs to the major facilitator superfamily. CAR1 family.

The protein localises to the membrane. In terms of biological role, MFS transporter; part of the gene cluster that mediates the biosynthesis the mycotoxin citrinin, a hepato-nephrotoxic compound to humans due to inhibition of respiration complex III. In Monascus ruber (Mold), this protein is Citrinin biosynthesis cluster MFS transporter mrr1.